Consider the following 284-residue polypeptide: Co-chaperone protein DjlA (284 aa).

At 1-6 (MHIFGK) the chain is on the periplasmic side. The helical transmembrane segment at 7–30 (ILGAFFGFLFGGPFGAIFGIFLGH) threads the bilayer. At 31–284 (QFDKARRLNQ…ELIRKEKGIK (254 aa)) the chain is on the cytoplasmic side. The interval 190 to 211 (QGGGFGGSQQQSHSGQQWQQPS) is disordered. A compositionally biased stretch (low complexity) spans 197–211 (SQQQSHSGQQWQQPS). The J domain occupies 218-284 (DAYEVLGVSE…ELIRKEKGIK (67 aa)).

Homodimer.

It is found in the cell inner membrane. In terms of biological role, regulatory DnaK co-chaperone. Direct interaction between DnaK and DjlA is needed for the induction of the wcaABCDE operon, involved in the synthesis of a colanic acid polysaccharide capsule, possibly through activation of the RcsB/RcsC phosphotransfer signaling pathway. The colanic acid capsule may help the bacterium survive conditions outside the host. The polypeptide is Co-chaperone protein DjlA (Vibrio cholerae serotype O1 (strain ATCC 39315 / El Tor Inaba N16961)).